The primary structure comprises 134 residues: Small ribosomal subunit protein uS8c (134 aa).

Belongs to the universal ribosomal protein uS8 family. In terms of assembly, part of the 30S ribosomal subunit.

The protein resides in the plastid. Its function is as follows. One of the primary rRNA binding proteins, it binds directly to 16S rRNA central domain where it helps coordinate assembly of the platform of the 30S subunit. This is Small ribosomal subunit protein uS8c (rps8) from Epifagus virginiana (Beechdrops).